The primary structure comprises 124 residues: Large ribosomal subunit protein bL12 (124 aa).

It belongs to the bacterial ribosomal protein bL12 family. As to quaternary structure, homodimer. Part of the ribosomal stalk of the 50S ribosomal subunit. Forms a multimeric L10(L12)X complex, where L10 forms an elongated spine to which 2 to 4 L12 dimers bind in a sequential fashion. Binds GTP-bound translation factors.

Functionally, forms part of the ribosomal stalk which helps the ribosome interact with GTP-bound translation factors. Is thus essential for accurate translation. This Akkermansia muciniphila (strain ATCC BAA-835 / DSM 22959 / JCM 33894 / BCRC 81048 / CCUG 64013 / CIP 107961 / Muc) protein is Large ribosomal subunit protein bL12.